A 298-amino-acid chain; its full sequence is Lipoyl synthase (298 aa).

[4Fe-4S] cluster contacts are provided by Cys-40, Cys-45, Cys-51, Cys-67, Cys-71, Cys-74, and Ser-280. The 217-residue stretch at 53 to 269 (AVRRTATFMI…KEIALSKGFT (217 aa)) folds into the Radical SAM core domain.

It belongs to the radical SAM superfamily. Lipoyl synthase family. It depends on [4Fe-4S] cluster as a cofactor.

Its subcellular location is the cytoplasm. It catalyses the reaction [[Fe-S] cluster scaffold protein carrying a second [4Fe-4S](2+) cluster] + N(6)-octanoyl-L-lysyl-[protein] + 2 oxidized [2Fe-2S]-[ferredoxin] + 2 S-adenosyl-L-methionine + 4 H(+) = [[Fe-S] cluster scaffold protein] + N(6)-[(R)-dihydrolipoyl]-L-lysyl-[protein] + 4 Fe(3+) + 2 hydrogen sulfide + 2 5'-deoxyadenosine + 2 L-methionine + 2 reduced [2Fe-2S]-[ferredoxin]. The protein operates within protein modification; protein lipoylation via endogenous pathway; protein N(6)-(lipoyl)lysine from octanoyl-[acyl-carrier-protein]. Functionally, catalyzes the radical-mediated insertion of two sulfur atoms into the C-6 and C-8 positions of the octanoyl moiety bound to the lipoyl domains of lipoate-dependent enzymes, thereby converting the octanoylated domains into lipoylated derivatives. The chain is Lipoyl synthase from Geobacillus sp. (strain WCH70).